A 39-amino-acid chain; its full sequence is Photosystem II reaction center protein L (39 aa).

The chain crosses the membrane as a helical span at residues S18–F38.

Belongs to the PsbL family. In terms of assembly, PSII is composed of 1 copy each of membrane proteins PsbA, PsbB, PsbC, PsbD, PsbE, PsbF, PsbH, PsbI, PsbJ, PsbK, PsbL, PsbM, PsbT, PsbX, PsbY, PsbZ, Psb30/Ycf12, peripheral proteins PsbO, CyanoQ (PsbQ), PsbU, PsbV and a large number of cofactors. It forms dimeric complexes.

It localises to the cellular thylakoid membrane. One of the components of the core complex of photosystem II (PSII). PSII is a light-driven water:plastoquinone oxidoreductase that uses light energy to abstract electrons from H(2)O, generating O(2) and a proton gradient subsequently used for ATP formation. It consists of a core antenna complex that captures photons, and an electron transfer chain that converts photonic excitation into a charge separation. This subunit is found at the monomer-monomer interface and is required for correct PSII assembly and/or dimerization. This is Photosystem II reaction center protein L from Synechococcus sp. (strain WH7803).